Here is a 362-residue protein sequence, read N- to C-terminus: UV excision repair protein RAD23 homolog A (362 aa).

In terms of domain architecture, Ubiquitin-like spans methionine 1 to threonine 81. Disordered stretches follow at residues lysine 80–glycine 160 and glycine 201–glycine 227. The segment covering proline 88–serine 109 has biased composition (low complexity). A Glycyl lysine isopeptide (Lys-Gly) (interchain with G-Cter in ubiquitin) cross-link involves residue lysine 122. Phosphoserine is present on residues serine 123, serine 128, serine 133, serine 136, and serine 138. A compositionally biased stretch (low complexity) spans glutamate 126 to serine 144. Residues serine 161–glycine 201 enclose the UBA 1 domain. Phosphoserine occurs at positions 205, 294, and 356. In terms of domain architecture, UBA 2 spans proline 317–glutamine 357.

The protein belongs to the RAD23 family. Interacts with XPC; the interaction is suggesting the existence of a functional equivalent variant XPC complex. Interacts with PSMD4 and PSMC5. Interacts with ATXN3. Interacts with UBQLN2.

Its subcellular location is the nucleus. In terms of biological role, multiubiquitin chain receptor involved in modulation of proteasomal degradation. Binds to 'Lys-48'-linked polyubiquitin chains in a length-dependent manner and with a lower affinity to 'Lys-63'-linked polyubiquitin chains. Proposed to be capable to bind simultaneously to the 26S proteasome and to polyubiquitinated substrates and to deliver ubiquitinated proteins to the proteasome. Involved in nucleotide excision repair and is thought to be functional equivalent for RAD23B in global genome nucleotide excision repair (GG-NER) by association with XPC. In vitro, XPC:RAD23A dimer has NER activity. Can stabilize XPC. This chain is UV excision repair protein RAD23 homolog A (RAD23A), found in Bos taurus (Bovine).